We begin with the raw amino-acid sequence, 685 residues long: Hemocyanin subunit X (685 aa).

Positions 1 to 20 are cleaved as a signal peptide; it reads MKYCTESLILILAVIGCISA. Cu cation is bound by residues His-210, His-214, and His-243. N-linked (GlcNAc...) asparagine glycosylation is present at Asn-329. Residues His-367, His-371, and His-407 each coordinate Cu cation. Cys-577 and Cys-625 are oxidised to a cystine.

It belongs to the tyrosinase family. Hemocyanin subfamily.

It is found in the secreted. Its subcellular location is the extracellular space. Hemocyanins are copper-containing oxygen carriers occurring freely dissolved in the hemolymph of many mollusks and arthropods. This is Hemocyanin subunit X (HCX) from Scutigera coleoptrata (House centipede).